The primary structure comprises 129 residues: MATVHYSRRPGTPPVTLTSSPSMDDVATPIPYLPTYAEAVADAPPPYRSRESLVFSPPLFPHVENGTTQQSYDCLDCAYDGIHRLQLAFLRIRKCCVPAFLILFGILTLTAVVVAIVAVFPEEPPNSTT.

The tract at residues 1 to 25 is disordered; it reads MATVHYSRRPGTPPVTLTSSPSMDD. A PPXY motif motif is present at residues 44 to 47; the sequence is PPPY. The helical transmembrane segment at 100 to 120 threads the bilayer; the sequence is FLILFGILTLTAVVVAIVAVF.

This sequence belongs to the varicellovirus ORF0 protein family. As to quaternary structure, interacts with host ITCH; this interaction probably mediates ITCH degradation.

The protein resides in the host Golgi apparatus membrane. The protein is Membrane protein 0 of Homo sapiens (Human).